A 408-amino-acid polypeptide reads, in one-letter code: Protein EcsB (408 aa).

9 consecutive transmembrane segments (helical) span residues 30–50 (HLVI…SKWI), 53–73 (IPAH…VLTS), 111–131 (LFPL…VTPG), 134–154 (LVSY…NQVM), 180–200 (LVLY…YVIM), 284–304 (YLGI…YVSA), 308–328 (IAAV…LPLF), 351–371 (YFSL…VASA), and 374–394 (AGLT…FVVL).

It is found in the cell membrane. In terms of biological role, presumed to form part of an ABC-transporter, it may form a transport channel. The protein is Protein EcsB (ecsB) of Bacillus subtilis (strain 168).